A 283-amino-acid polypeptide reads, in one-letter code: Energy-coupling factor transporter ATP-binding protein EcfA1 (283 aa).

An ABC transporter domain is found at 7–244; sequence VEFRHVSFTY…PELLQEIGLD (238 aa). 41–48 serves as a coordination point for ATP; the sequence is GHNGSGKS.

This sequence belongs to the ABC transporter superfamily. Energy-coupling factor EcfA family. In terms of assembly, forms a stable energy-coupling factor (ECF) transporter complex composed of 2 membrane-embedded substrate-binding proteins (S component), 2 ATP-binding proteins (A component) and 2 transmembrane proteins (T component).

It localises to the cell membrane. In terms of biological role, ATP-binding (A) component of a common energy-coupling factor (ECF) ABC-transporter complex. Unlike classic ABC transporters this ECF transporter provides the energy necessary to transport a number of different substrates. The chain is Energy-coupling factor transporter ATP-binding protein EcfA1 from Lactobacillus acidophilus (strain ATCC 700396 / NCK56 / N2 / NCFM).